We begin with the raw amino-acid sequence, 455 residues long: MAGVKLQERAAVVGIGISNMALIRYLVARGVRVTACDRTSAEKLGERAAELARLGVPLVAGEGYLEPLADHDLIFLTPGMPKHLPEIEAARRRGAAISGEIGLVLDLCRAPVIGVTGSAGKTTTTTLIGEILRAAGRETYVGGNIGKPLIEQVEAIPSEAVVVLELSSFQLQLVHRSPHIAVVTNVSPNHLDVHATMEEYVEAKKAIFRRQSPADWLVLNADDPTVRAFAAEARSRVVLFSRRADPGGRDAAFVREDRVIWRRGGRETPILFLDEIRLPGLHNQENVLAAVAACFLAGAPLSAVREVVTQFTGVEHRIEPVRVLDGVKWYNDSKATSPAEAVAALTTLPAPIVLIAGGSDKGIPFDPIAPLVAEKVKTLILMGPTAPKIEEAVRRGGYAGPIRRAADMAEAVALAREAAAPGDTVLLSPACASFDAYRNFEERGRHFKSLVEALS.

117–123 (GSAGKTT) contacts ATP.

The protein belongs to the MurCDEF family.

Its subcellular location is the cytoplasm. It carries out the reaction UDP-N-acetyl-alpha-D-muramoyl-L-alanine + D-glutamate + ATP = UDP-N-acetyl-alpha-D-muramoyl-L-alanyl-D-glutamate + ADP + phosphate + H(+). Its pathway is cell wall biogenesis; peptidoglycan biosynthesis. Functionally, cell wall formation. Catalyzes the addition of glutamate to the nucleotide precursor UDP-N-acetylmuramoyl-L-alanine (UMA). The polypeptide is UDP-N-acetylmuramoylalanine--D-glutamate ligase (Symbiobacterium thermophilum (strain DSM 24528 / JCM 14929 / IAM 14863 / T)).